A 106-amino-acid polypeptide reads, in one-letter code: Acidic phospholipase A2 PhTX-III (106 aa).

Ca(2+) contacts are provided by Y23, G25, and G27. Intrachain disulfides connect C24-C40, C39-C75, C45-C106, C46-C68, and C55-C66. Residue H43 is part of the active site. Residue D44 coordinates Ca(2+). D69 is a catalytic residue.

Ca(2+) is required as a cofactor. Expressed by the venom gland.

Its subcellular location is the secreted. The enzyme catalyses a 1,2-diacyl-sn-glycero-3-phosphocholine + H2O = a 1-acyl-sn-glycero-3-phosphocholine + a fatty acid + H(+). Partially inhibited by magnesium ions and completely inhibited by zinc ions These divalent cations may act as competitive antagonists of the cofactor. Snake venom phospholipase A2 (PLA2) that induces inflammatory response, with local edema and release of cytokines IL-1 alpha, IL-6 and TNF-alpha. Does not exhibit myotoxic, anticoagulant and antibacterial effects. Release of pro-inflammatory cytokines may be due to mast cell degranulation, and edema may be induced by arachidonic acid that results from the PLA2 catalytic activity. PLA2 catalyzes the calcium-dependent hydrolysis of the 2-acyl groups in 3-sn-phosphoglycerides. In Bothrocophias hyoprora (Amazonian hognose viper), this protein is Acidic phospholipase A2 PhTX-III.